Consider the following 341-residue polypeptide: UDP-glucose 4-epimerase (341 aa).

This sequence belongs to the polysaccharide synthase family.

It catalyses the reaction UDP-alpha-D-glucose = UDP-alpha-D-galactose. Epimerizes UDP-galactose to UDP-glucose. The chain is UDP-glucose 4-epimerase (capD) from Rickettsia typhi (strain ATCC VR-144 / Wilmington).